A 129-amino-acid chain; its full sequence is Small ribosomal subunit protein uS11c (129 aa).

The protein belongs to the universal ribosomal protein uS11 family. In terms of assembly, part of the 30S ribosomal subunit.

It localises to the plastid. It is found in the chloroplast. The polypeptide is Small ribosomal subunit protein uS11c (Pleurastrum terricola (Filamentous green alga)).